The sequence spans 262 residues: Global transcriptional regulator CodY (262 aa).

Positions 1–159 (MAHLLEKTRK…ASTVVGIQLL (159 aa)) are GAF domain. Residues 207–226 (ASVIADRIGITRSVIVNALR) constitute a DNA-binding region (H-T-H motif).

It belongs to the CodY family.

It localises to the cytoplasm. In terms of biological role, DNA-binding global transcriptional regulator which is involved in the adaptive response to starvation and acts by directly or indirectly controlling the expression of numerous genes in response to nutrient availability. During rapid exponential growth, CodY is highly active and represses genes whose products allow adaptation to nutrient depletion. The polypeptide is Global transcriptional regulator CodY (Streptococcus pneumoniae (strain ATCC BAA-255 / R6)).